The following is a 312-amino-acid chain: Ribosomal RNA small subunit methyltransferase H (312 aa).

S-adenosyl-L-methionine contacts are provided by residues 35–37 (GGH), D55, F79, D101, and Q108.

It belongs to the methyltransferase superfamily. RsmH family.

It localises to the cytoplasm. It catalyses the reaction cytidine(1402) in 16S rRNA + S-adenosyl-L-methionine = N(4)-methylcytidine(1402) in 16S rRNA + S-adenosyl-L-homocysteine + H(+). Its function is as follows. Specifically methylates the N4 position of cytidine in position 1402 (C1402) of 16S rRNA. This Glaesserella parasuis serovar 5 (strain SH0165) (Haemophilus parasuis) protein is Ribosomal RNA small subunit methyltransferase H.